A 97-amino-acid chain; its full sequence is U-reduvitoxin-Pr10a (97 aa).

Residues 1–18 (MKTALFLVFALAFIAVEG) form the signal peptide. 2 consecutive Pacifastin domains span residues 22–59 (KACSKPGQTVLAPDGCNHCRCSKNGIIMGCTKKMCPPR) and 62–97 (KQSCKPGATFKHKDGCNTCKCSDDGKSARCTARLCW). Intrachain disulfides connect C24–C42, C37–C56, and C40–C51. Residues 57–59 (PPR) form a pro-Pro-Arg motif necessary for proteolytic processing region. 3 disulfide bridges follow: C65–C82, C77–C96, and C80–C91.

The protein belongs to the protease inhibitor I19 family. As to expression, expressed by the venom gland.

Its subcellular location is the secreted. Its function is as follows. Inhibits trypsin activity and prophenoloxidase (PPO) activation, an enzyme essential for both clotting and insect innate immune responses. It does not inhibit activity of chymotrypsin and protease K, and has no effect on phenoloxidase (PO) activity. The chain is U-reduvitoxin-Pr10a from Platymeris rhadamanthus (Red spot assassin bug).